The primary structure comprises 1329 residues: MQSDSGLPPKTYSGVKFALVGFNPIHGNSLRSKLVSGGGVDVGQFTQSCTHLIVDKLLYDDPICVAARNSGKVVVTGSWVDHSFDIGMLDNANSILYRPLRDLNGIPGSKALVVCLTGYQGHDREDIMRMVELMGGQFSKPLVANRVTHLICYKFEGEKYELAKRIKRIKLVNHRWLEDCLKNWKLLPEVDYEISGYELDIMEASARDSEDEAEDASVKPANTSPLGLRVGAVPAVEISKPGGKDFPLEEGSSLCNTSKDNWLTPKRTDRPFEAMVSTDLGVAQQHNYVSPIRVANKTPEQGMSKMETDGSTSINRSIRRHSSLATYSRKTLQRSPETDTLGKESSGQNRSLRMDDKGLKASSAFNTSASKSGSSMERTSLFRDLGKIDMLHGEEFPPMMPQAKFTDGSVSRKDSLRVHHNSEASIPPPSSLLLQELRPSSPNDNLRPVMSISDPTESEEAGHKSPTSELNTKLLSSNVVPMVDALSTAENIISNCAWDEIPEKSLTERMTENVLLQEQRSGSPKQNLSVVPNLREAAHELDLSDSAARLFNSGVVPMEADIRTPENSTMKGALDEVPERSVTDPVMRRSSTSPGSGLIRMKDKQETELTTKKTAPKKSLGTRGRKKNPINQKGSIYLSEPSPTDERNVCLNKGKVSAPVTGNSNQKEISSPVLNTEVVQDMAKHIDTETEALQGIDSVDNKSLAPEEKDHLVLDLMVNQDKLQAKTPEAADAEVEITVLERELNDVPTEDPSDGALQSEVDKNTSKRKREAGVGKNSLQRGKKGSSFTAKVGKSRVKKTKISRKENDIKANGTLMKDGGDNSADGKENLALEHENGKVSSGGDQSLVAGETLTRKEAATKDPSYAAAQLEVDTKKGKRRKQATVEENRLQTPSVKKAKVSKKEDGAKANNTVKKDIWIHSAEVKENVAVDENCGDVSSDGAQSLVVEKSLAKKEAAAKDPSNAAMQLEFDDNKCKHGKEGIVERSSLQSGKKGSSSRVEVGKSSVKKTKKSEKGSGTEATDTVMKDVGDNSAKEKENIAVDNESRKVGSGGDQSPVARKKVAKSAKTGTKAEKESKQLRVNPLASRKVFQDQEHEPKFFIVSGPRSQRNEYQQIIRRLKGKCCRDSHQWSYQATHFIAPEIRRTEKFFAAAASGSWILKTDYVADSKEAGKLLQEEPYEWHSSGLSADGAINLESPKKWRLVREKTGHGALYGLRIVVYGDCTIPCLDTLKRAVKAGDGTILATAPPYTRFLNQNTDFALISPGMPRDDVWIQEFIRHEIPCVLSDYLVEYVCKPGYALDKHVLYNTNSWAEKSFNKMQLRADLCVYH.

BRCT domains lie at 7 to 97 (LPPK…SILY) and 104 to 194 (NGIP…DYEI). Disordered regions lie at residues 295 to 378 (ANKT…SMER), 393 to 470 (GEEF…TSEL), 576 to 645 (EVPE…SPTD), 745 to 827 (NDVP…ADGK), and 952 to 1077 (AKKE…KESK). 2 stretches are compositionally biased toward polar residues: residues 323–335 (SLAT…LQRS) and 363–378 (SAFN…SMER). Composition is skewed to basic and acidic residues over residues 410–422 (VSRK…HHNS) and 600–611 (RMKDKQETELTT). Over residues 793-802 (GKSRVKKTKI) the composition is skewed to basic residues. 2 stretches are compositionally biased toward basic and acidic residues: residues 818-827 (DGGDNSADGK) and 971-983 (DDNK…EGIV). The segment covering 986-1004 (SSLQSGKKGSSSRVEVGKS) has biased composition (low complexity). Residues 1024–1047 (VMKDVGDNSAKEKENIAVDNESRK) are compositionally biased toward basic and acidic residues. The 92-residue stretch at 1090–1181 (FQDQEHEPKF…KLLQEEPYEW (92 aa)) folds into the BRCT 3 domain.

This chain is BRCT domain-containing protein At4g02110, found in Arabidopsis thaliana (Mouse-ear cress).